We begin with the raw amino-acid sequence, 532 residues long: UDP-N-acetylmuramyl-tripeptide synthetase (532 aa).

Ser-34 serves as a coordination point for UDP-N-acetyl-alpha-D-muramoyl-L-alanyl-D-glutamate. Residue 127–133 coordinates ATP; the sequence is GTEGKSS. UDP-N-acetyl-alpha-D-muramoyl-L-alanyl-D-glutamate-binding positions include 171–172, Ser-198, and Arg-208; that span reads TT. At Lys-240 the chain carries N6-carboxylysine.

Belongs to the MurCDEF family. MurE subfamily. Post-translationally, carboxylation is probably crucial for Mg(2+) binding and, consequently, for the gamma-phosphate positioning of ATP.

The protein localises to the cytoplasm. It functions in the pathway cell wall biogenesis; peptidoglycan biosynthesis. Functionally, catalyzes the addition of an amino acid to the nucleotide precursor UDP-N-acetylmuramoyl-L-alanyl-D-glutamate (UMAG) in the biosynthesis of bacterial cell-wall peptidoglycan. This Treponema denticola (strain ATCC 35405 / DSM 14222 / CIP 103919 / JCM 8153 / KCTC 15104) protein is UDP-N-acetylmuramyl-tripeptide synthetase.